A 316-amino-acid polypeptide reads, in one-letter code: Nod factor export ATP-binding protein I (316 aa).

The 231-residue stretch at 18 to 248 folds into the ABC transporter domain; that stretch reads IDFSDVSKTY…LIGCEVIEIY (231 aa). 50-57 contacts ATP; it reads GPNGAGKS.

Belongs to the ABC transporter superfamily. Lipooligosaccharide exporter (TC 3.A.1.102) family. As to quaternary structure, the complex is composed of two ATP-binding proteins (NodI) and two transmembrane proteins (NodJ).

It localises to the cell inner membrane. Functionally, part of the ABC transporter complex NodIJ involved in the export of the nodulation factors (Nod factors), the bacterial signal molecules that induce symbiosis and subsequent nodulation induction. Nod factors are LCO (lipo-chitin oligosaccharide), a modified beta-1,4-linked N-acetylglucosamine oligosaccharide. This subunit is responsible for energy coupling to the transport system. The polypeptide is Nod factor export ATP-binding protein I (Rhizobium etli (strain ATCC 51251 / DSM 11541 / JCM 21823 / NBRC 15573 / CFN 42)).